A 372-amino-acid polypeptide reads, in one-letter code: Chaperone protein DnaJ (372 aa).

In terms of domain architecture, J spans 5-69 (DYYEVLGVSK…DKRKQYDQFG (65 aa)). Residues 139–221 (GVDKIIELDL…CKGKGKYLER (83 aa)) form a CR-type zinc finger. Positions 152, 155, 169, 172, 195, 198, 209, and 212 each coordinate Zn(2+). CXXCXGXG motif repeat units lie at residues 152–159 (CSVCFGSG), 169–176 (CNNCHGTG), 195–202 (CNVCNGAG), and 209–216 (CKNCKGKG).

Belongs to the DnaJ family. As to quaternary structure, homodimer. The cofactor is Zn(2+).

It localises to the cytoplasm. In terms of biological role, participates actively in the response to hyperosmotic and heat shock by preventing the aggregation of stress-denatured proteins and by disaggregating proteins, also in an autonomous, DnaK-independent fashion. Unfolded proteins bind initially to DnaJ; upon interaction with the DnaJ-bound protein, DnaK hydrolyzes its bound ATP, resulting in the formation of a stable complex. GrpE releases ADP from DnaK; ATP binding to DnaK triggers the release of the substrate protein, thus completing the reaction cycle. Several rounds of ATP-dependent interactions between DnaJ, DnaK and GrpE are required for fully efficient folding. Also involved, together with DnaK and GrpE, in the DNA replication of plasmids through activation of initiation proteins. The sequence is that of Chaperone protein DnaJ from Mycoplasma mycoides subsp. mycoides SC (strain CCUG 32753 / NCTC 10114 / PG1).